We begin with the raw amino-acid sequence, 801 residues long: U-box domain-containing protein 44 (801 aa).

In terms of domain architecture, U-box spans 22-101 (HIYEAFICPL…EEWRSRNDAA (80 aa)). ARM repeat units follow at residues 134 to 173 (RSNR…VVVE), 176 to 215 (DESK…ELSK), 218 to 259 (ALCE…NMER), 261 to 300 (EEIV…ELPL), 301 to 340 (NNDV…KISS), 342 to 386 (EGSA…NIVN), 390 to 429 (DFDK…GLTS), 435 to 475 (PKVV…NLSP), and 480 to 521 (ELAK…ELPD).

In terms of assembly, interacts with AAO3. Binds to SD129. Expressed in leaves, root vasculature and guard cells.

The catalysed reaction is S-ubiquitinyl-[E2 ubiquitin-conjugating enzyme]-L-cysteine + [acceptor protein]-L-lysine = [E2 ubiquitin-conjugating enzyme]-L-cysteine + N(6)-ubiquitinyl-[acceptor protein]-L-lysine.. The protein operates within protein modification; protein ubiquitination. Its function is as follows. Functions as an E3 ubiquitin-protein ligase. Prevents premature senescence probably by targeting proteins involved in this process for degradation. Promotes the degradation of AAO3 and thus represses abscisic acid (ABA) biosynthesis. This Arabidopsis thaliana (Mouse-ear cress) protein is U-box domain-containing protein 44 (PUB44).